Consider the following 83-residue polypeptide: Large ribosomal subunit protein bL31 (83 aa).

This sequence belongs to the bacterial ribosomal protein bL31 family. Type A subfamily. As to quaternary structure, part of the 50S ribosomal subunit.

In terms of biological role, binds the 23S rRNA. The protein is Large ribosomal subunit protein bL31 of Synechococcus sp. (strain CC9605).